We begin with the raw amino-acid sequence, 300 residues long: Ribonuclease HIII (300 aa).

Positions 86 to 300 (RPRLGVDESG…FYEICDSTDI (215 aa)) constitute an RNase H type-2 domain. Positions 92, 93, and 196 each coordinate a divalent metal cation.

It belongs to the RNase HII family. RnhC subfamily. Requires Mn(2+) as cofactor. Mg(2+) is required as a cofactor.

Its subcellular location is the cytoplasm. The enzyme catalyses Endonucleolytic cleavage to 5'-phosphomonoester.. Functionally, endonuclease that specifically degrades the RNA of RNA-DNA hybrids. This is Ribonuclease HIII from Chlamydia abortus (strain DSM 27085 / S26/3) (Chlamydophila abortus).